The sequence spans 264 residues: S-adenosylmethionine decarboxylase proenzyme (264 aa).

Residue Ser112 is the Schiff-base intermediate with substrate; via pyruvic acid of the active site. Ser112 carries the post-translational modification Pyruvic acid (Ser); by autocatalysis. His117 serves as the catalytic Proton acceptor; for processing activity. Cys140 acts as the Proton donor; for catalytic activity in catalysis.

Belongs to the prokaryotic AdoMetDC family. Type 2 subfamily. Heterooctamer of four alpha and four beta chains arranged as a tetramer of alpha/beta heterodimers. It depends on pyruvate as a cofactor. Post-translationally, is synthesized initially as an inactive proenzyme. Formation of the active enzyme involves a self-maturation process in which the active site pyruvoyl group is generated from an internal serine residue via an autocatalytic post-translational modification. Two non-identical subunits are generated from the proenzyme in this reaction, and the pyruvate is formed at the N-terminus of the alpha chain, which is derived from the carboxyl end of the proenzyme. The post-translation cleavage follows an unusual pathway, termed non-hydrolytic serinolysis, in which the side chain hydroxyl group of the serine supplies its oxygen atom to form the C-terminus of the beta chain, while the remainder of the serine residue undergoes an oxidative deamination to produce ammonia and the pyruvoyl group blocking the N-terminus of the alpha chain.

The catalysed reaction is S-adenosyl-L-methionine + H(+) = S-adenosyl 3-(methylsulfanyl)propylamine + CO2. The protein operates within amine and polyamine biosynthesis; S-adenosylmethioninamine biosynthesis; S-adenosylmethioninamine from S-adenosyl-L-methionine: step 1/1. In terms of biological role, catalyzes the decarboxylation of S-adenosylmethionine to S-adenosylmethioninamine (dcAdoMet), the propylamine donor required for the synthesis of the polyamines spermine and spermidine from the diamine putrescine. The sequence is that of S-adenosylmethionine decarboxylase proenzyme from Salmonella dublin (strain CT_02021853).